The sequence spans 548 residues: Membrane protein insertase YidC (548 aa).

The chain crosses the membrane as a helical span at residues 6–26 (NLLVIALLFVSFMIWQAWEQD). The segment at 28-56 (NPQPQTQQTTQTTTTAAGSAADQGVPASG) is disordered. Positions 29-42 (PQPQTQQTTQTTTT) are enriched in low complexity. The next 4 helical transmembrane spans lie at 350 to 370 (FVGN…GIMY), 424 to 444 (FPLI…MGSI), 458 to 478 (LSAQ…MFFI), and 499 to 519 (PVIF…YYIV).

The protein belongs to the OXA1/ALB3/YidC family. Type 1 subfamily. In terms of assembly, interacts with the Sec translocase complex via SecD. Specifically interacts with transmembrane segments of nascent integral membrane proteins during membrane integration.

It is found in the cell inner membrane. Required for the insertion and/or proper folding and/or complex formation of integral membrane proteins into the membrane. Involved in integration of membrane proteins that insert both dependently and independently of the Sec translocase complex, as well as at least some lipoproteins. Aids folding of multispanning membrane proteins. This chain is Membrane protein insertase YidC, found in Salmonella enteritidis PT4 (strain P125109).